Reading from the N-terminus, the 137-residue chain is Phosphatidylinositol N-acetylglucosaminyltransferase subunit P (137 aa).

The next 2 helical transmembrane spans lie at 16 to 36 (VYGFVGSISIVVATVIFLIWG) and 58 to 78 (MAMPMYSMVTLLVALVFYIGL).

It belongs to the PIGP family.

It is found in the membrane. The enzyme catalyses a 1,2-diacyl-sn-glycero-3-phospho-(1D-myo-inositol) + UDP-N-acetyl-alpha-D-glucosamine = a 6-(N-acetyl-alpha-D-glucosaminyl)-1-(1,2-diacyl-sn-glycero-3-phospho)-1D-myo-inositol + UDP + H(+). Its pathway is glycolipid biosynthesis; glycosylphosphatidylinositol-anchor biosynthesis. Part of the complex catalyzing the transfer of N-acetylglucosamine from UDP-N-acetylglucosamine to phosphatidylinositol, the first step of GPI biosynthesis. This chain is Phosphatidylinositol N-acetylglucosaminyltransferase subunit P, found in Arabidopsis thaliana (Mouse-ear cress).